Here is a 225-residue protein sequence, read N- to C-terminus: PKHD-type hydroxylase YbiX (225 aa).

The region spanning Thr-78–Ser-177 is the Fe2OG dioxygenase domain. Positions 96, 98, and 158 each coordinate Fe cation. Arg-168 contacts 2-oxoglutarate.

Fe(2+) is required as a cofactor. It depends on L-ascorbate as a cofactor.

This chain is PKHD-type hydroxylase YbiX, found in Escherichia fergusonii (strain ATCC 35469 / DSM 13698 / CCUG 18766 / IAM 14443 / JCM 21226 / LMG 7866 / NBRC 102419 / NCTC 12128 / CDC 0568-73).